A 334-amino-acid polypeptide reads, in one-letter code: Thiamine-binding periplasmic protein (334 aa).

A signal peptide spans 1-23; that stretch reads MRLLSLLTFSLFAVIGLAPAAQA. Thiamine is bound by residues 64–65, 166–167, Trp202, and 220–223; these read DG, AT, and YTTS.

The protein belongs to the bacterial solute-binding protein 1 family. The complex is composed of two ATP-binding proteins (ThiQ), two transmembrane proteins (ThiP) and a solute-binding protein (ThiB).

It is found in the periplasm. Its function is as follows. Part of the ABC transporter complex ThiBPQ involved in thiamine import. In Brucella suis biovar 1 (strain 1330), this protein is Thiamine-binding periplasmic protein (thiB).